Reading from the N-terminus, the 603-residue chain is Elongation factor 4 (603 aa).

One can recognise a tr-type G domain in the interval 7 to 191 (SNIRNFSIVA…AIVTRLPPPK (185 aa)). GTP-binding positions include 19 to 24 (DHGKST) and 138 to 141 (NKVD).

The protein belongs to the TRAFAC class translation factor GTPase superfamily. Classic translation factor GTPase family. LepA subfamily.

The protein resides in the cell inner membrane. It catalyses the reaction GTP + H2O = GDP + phosphate + H(+). In terms of biological role, required for accurate and efficient protein synthesis under certain stress conditions. May act as a fidelity factor of the translation reaction, by catalyzing a one-codon backward translocation of tRNAs on improperly translocated ribosomes. Back-translocation proceeds from a post-translocation (POST) complex to a pre-translocation (PRE) complex, thus giving elongation factor G a second chance to translocate the tRNAs correctly. Binds to ribosomes in a GTP-dependent manner. The chain is Elongation factor 4 from Bradyrhizobium diazoefficiens (strain JCM 10833 / BCRC 13528 / IAM 13628 / NBRC 14792 / USDA 110).